Here is a 427-residue protein sequence, read N- to C-terminus: Flavohemoprotein (427 aa).

The region spanning 30 to 168 is the Globin domain; it reads ELNESQKQYI…LAKILIDSEK (139 aa). His114 contributes to the heme b binding site. Residues Tyr124 and Glu167 each act as charge relay system in the active site. Positions 176–427 are reductase; the sequence is WNGFVEFKVT…QSEFFGPYIP (252 aa). An FAD-binding FR-type domain is found at 177–285; it reads NGFVEFKVTE…SPPAGNFVYK (109 aa). Residues Tyr216 and 232–235 each bind FAD; that span reads REYS. 301-306 provides a ligand contact to NADP(+); the sequence is GIGITP. Residue 421-424 participates in FAD binding; that stretch reads FFGP.

This sequence belongs to the globin family. Two-domain flavohemoproteins subfamily. In the C-terminal section; belongs to the flavoprotein pyridine nucleotide cytochrome reductase family. FAD serves as cofactor. Requires heme b as cofactor.

It localises to the cytoplasm. The protein localises to the nucleus. The catalysed reaction is 2 nitric oxide + NADPH + 2 O2 = 2 nitrate + NADP(+) + H(+). It carries out the reaction 2 nitric oxide + NADH + 2 O2 = 2 nitrate + NAD(+) + H(+). Is involved in NO detoxification in an aerobic process, termed nitric oxide dioxygenase (NOD) reaction that utilizes O(2) and NAD(P)H to convert NO to nitrate, which protects the fungus from various noxious nitrogen compounds. Therefore, plays a central role in the inducible response to nitrosative stress. Its function is as follows. In the presence of oxygen and NADH, it has NADH oxidase activity, which leads to the generation of superoxide and H(2)O(2). Under anaerobic conditions, it also exhibits nitric oxide reductase and FAD reductase activities. However, all these reactions are much lower than NOD activity. The polypeptide is Flavohemoprotein (Schizosaccharomyces pombe (strain 972 / ATCC 24843) (Fission yeast)).